The chain runs to 418 residues: Elongation factor Tu, chloroplastic (418 aa).

The region spanning 10 to 214 is the tr-type G domain; sequence KPHVNIGTIG…NVDSYIPTPQ (205 aa). Residues 19–26 form a G1 region; sequence GHVDHGKT. GTP is bound at residue 19-26; the sequence is GHVDHGKT. Residue Thr-26 coordinates Mg(2+). Residues 60–64 are G2; it reads GITIN. Residues 81 to 84 are G3; the sequence is DCPG. Residues 81 to 85 and 136 to 139 contribute to the GTP site; these read DCPGH and NKED. The tract at residues 136-139 is G4; that stretch reads NKED. The interval 174–176 is G5; the sequence is SAL.

The protein belongs to the TRAFAC class translation factor GTPase superfamily. Classic translation factor GTPase family. EF-Tu/EF-1A subfamily.

The protein resides in the plastid. It is found in the chloroplast. The enzyme catalyses GTP + H2O = GDP + phosphate + H(+). Functionally, GTP hydrolase that promotes the GTP-dependent binding of aminoacyl-tRNA to the A-site of ribosomes during protein biosynthesis. The chain is Elongation factor Tu, chloroplastic (tufA) from Chlamydomonas reinhardtii (Chlamydomonas smithii).